The following is a 336-amino-acid chain: Alcohol dehydrogenase, propanol-preferring (336 aa).

Zn(2+)-binding residues include C37, H58, C89, C92, C95, C103, and C145.

It belongs to the zinc-containing alcohol dehydrogenase family. The cofactor is Zn(2+).

The enzyme catalyses a primary alcohol + NAD(+) = an aldehyde + NADH + H(+). It catalyses the reaction a secondary alcohol + NAD(+) = a ketone + NADH + H(+). Functionally, preferred specificity is towards 1-propanol. The chain is Alcohol dehydrogenase, propanol-preferring (adhP) from Escherichia coli (strain K12).